The primary structure comprises 765 residues: ATP-dependent RNA helicase DBP4 (765 aa).

A Q motif motif is present at residues 48-76 (SQFSDLPITENTLKGLKEATFVSLTDIQK). The 175-residue stretch at 79–253 (IPIALKGEDL…RLSLTNPNKI (175 aa)) folds into the Helicase ATP-binding domain. 92-99 (ARTGSGKT) contributes to the ATP binding site. Residues 201-204 (DEAD) carry the DEAD box motif. One can recognise a Helicase C-terminal domain in the interval 267–439 (SLEQYYVKVP…SIRPQLQSLC (173 aa)). Basic and acidic residues-rich tracts occupy residues 655 to 668 (KISD…ERQK) and 720 to 738 (PVSK…KSKN). The interval 655 to 765 (KISDITDKEV…ESLTARLIGN (111 aa)) is disordered. A compositionally biased stretch (acidic residues) spans 744-756 (VEYDEPETLEDLE).

The protein belongs to the DEAD box helicase family. DDX10/DBP4 subfamily. Interacts with the U3 and U14 snoRNAs. Associates with pre-ribosomal complexes.

The protein resides in the nucleus. It is found in the nucleolus. It carries out the reaction ATP + H2O = ADP + phosphate + H(+). Functionally, ATP-dependent RNA helicase required for ribosome biogenesis. Involved in the release of U14 snoRNA in pre-ribosomal complexes. Required for pre-rRNA cleavage at site A2. The protein is ATP-dependent RNA helicase DBP4 (DBP4) of Candida albicans (strain SC5314 / ATCC MYA-2876) (Yeast).